The following is a 1353-amino-acid chain: ABC-type transporter MYCGRDRAFT_41235 (1353 aa).

A helical membrane pass occupies residues 40-60; that stretch reads ASASLWNWFFFSWLNPLIAIG. A glycan (N-linked (GlcNAc...) asparagine) is linked at asparagine 121. The next 6 membrane-spanning stretches (helical) occupy residues 124 to 144, 172 to 192, 250 to 270, 271 to 291, 364 to 384, and 397 to 417; these read VLVWFWVGGAMKLFADVATIT, IGQGFGMAIGLALLLASGVMA, FACGYFHATWTSVIQILICLG, LTIASLGPAALTGFGLMAILV, VALSFSVPTLAAVVSFVTYAA, and ALTLFMLLRTPLLLLPVAFGA. The region spanning 129–420 is the ABC transmembrane type-1 1 domain; it reads WVGGAMKLFA…LPVAFGAAAD (292 aa). Residues 460 to 684 form the ABC transporter 1 domain; it reads YRVQDHSDEK…EGGQMRRVVE (225 aa). N-linked (GlcNAc...) asparagine glycosylation is present at asparagine 481. ATP is bound at residue 496 to 503; it reads GPVGAGKS. The disordered stretch occupies residues 687 to 720; sequence ASKSSAEEEEVEDGDLKDGVPSTDGGDASQTTSN. 6 consecutive transmembrane segments (helical) span residues 748–768, 796–816, 864–882, 888–907, 973–993, and 1002–1022; these read PAFTLTFFILSMLIFQGGSIL, LGVSQAIGLLAMSSIFGFFIF, AFRMLLSTVAQVVGAVVLI, WFLLAVFVIVILYILTGMYY, LSVRLDLLGTCLVLLVGLIVV, and AQGGVALSYIVTVQAVFGFMI. Residues 756–1030 enclose the ABC transmembrane type-1 2 domain; it reads ILSMLIFQGG…MIRQSAEIEN (275 aa). The ABC transporter 2 domain maps to 1070-1334; sequence IEMRDVVFTH…EGGHFRSLCS (265 aa). An ATP-binding site is contributed by 1104-1111; that stretch reads GRTGSGKS. Over residues 1191 to 1200 the composition is skewed to polar residues; that stretch reads QSSAETLTSS. The tract at residues 1191–1223 is disordered; sequence QSSAETLTSSDQEKSSPDDAAISPSSHSHSQHL. The span at 1208–1218 shows a compositional bias: low complexity; it reads DDAAISPSSHS.

The protein belongs to the ABC transporter superfamily. ABCC family. Conjugate transporter (TC 3.A.1.208) subfamily.

The protein localises to the cell membrane. Functionally, multidrug resistance protein; part of the gene cluster 14 that mediates the biosynthesis of a ferrichrome A-like siderophors which may contribute to organismal virulence. The sequence is that of ABC-type transporter MYCGRDRAFT_41235 from Zymoseptoria tritici (strain CBS 115943 / IPO323) (Speckled leaf blotch fungus).